The primary structure comprises 595 residues: Aspartate--tRNA(Asp/Asn) ligase (595 aa).

Glu-178 lines the L-aspartate pocket. An aspartate region spans residues 202–205; that stretch reads QIFK. Residue Arg-224 participates in L-aspartate binding. ATP is bound by residues 224 to 226 and Gln-233; that span reads RDE. His-458 lines the L-aspartate pocket. Residue Glu-488 coordinates ATP. Arg-495 contacts L-aspartate. Residue 540-543 participates in ATP binding; that stretch reads GIDR.

The protein belongs to the class-II aminoacyl-tRNA synthetase family. Type 1 subfamily. Homodimer.

It is found in the cytoplasm. It carries out the reaction tRNA(Asx) + L-aspartate + ATP = L-aspartyl-tRNA(Asx) + AMP + diphosphate. Functionally, aspartyl-tRNA synthetase with relaxed tRNA specificity since it is able to aspartylate not only its cognate tRNA(Asp) but also tRNA(Asn). Reaction proceeds in two steps: L-aspartate is first activated by ATP to form Asp-AMP and then transferred to the acceptor end of tRNA(Asp/Asn). The sequence is that of Aspartate--tRNA(Asp/Asn) ligase from Acaryochloris marina (strain MBIC 11017).